The sequence spans 487 residues: Bifunctional cytokinin biosynthesis protein (487 aa).

The tract at residues 1–266 is adenylate isopentenyltransferase; sequence MESTNRFMIG…RMASDFCYAS (266 aa). The interval 267-487 is cytokinin riboside 5'-monophosphate phosphoribohydrolase; the sequence is TSISFHPINE…FSRKGELEWV (221 aa). Substrate contacts are provided by residues glutamate 352, 380-381, 403-409, and threonine 415; these read RK and GYGTLEE.

The protein in the N-terminal section; belongs to the IPP transferase family. It in the C-terminal section; belongs to the LOG family.

The enzyme catalyses dimethylallyl diphosphate + AMP = N(6)-(dimethylallyl)adenosine 5'-phosphate + diphosphate. It carries out the reaction N(6)-(dimethylallyl)adenosine 5'-phosphate + H2O = N(6)-dimethylallyladenine + D-ribose 5-phosphate. The catalysed reaction is 9-ribosyl-trans-zeatin 5'-phosphate + H2O = trans-zeatin + D-ribose 5-phosphate. Its pathway is secondary metabolite biosynthesis. Functionally, bifunctional cytokinin synthesis protein; part of the gene cluster that mediates the biosynthesis of cytokinins such as fusatin, fusatinic acids or 8-oxofusatin, known for their growth promoting and anti-senescence activities toward host plants. FCK1 is a bifunctional enzyme that performs the first steps in the biosynthesis of Fusarium cytokinins. It first condenses adenosine monophosphate (AMP) with dimethylallyl diphosphate (DMAPP) to yield isoprenyl adenosine monophosphate. It then catalyzes the removal of the phosphoribose to produce isopentenylaldehyde. The cytochrome P450 monooxygenase then converts isopentenylaldehyde to trans-zeatin. A condensation step converts trans-zeatin to fusatin which is further modified to produce fusatinic acid. The mechanism for oxidation of fusatin to fusatinic acid remains unknown. 8-oxofusatin could be produced through several pathways, via direct oxygenation of fusatin, or via the 8-oxo-pentenyladenine intermediate which itself must arise from either the prenylation of 8-oxo-AMP by FCK1 and/or oxygenation of isopentenylaldehyde. Both the FCK3 and FCK4 enzymes act downstream of the identified cytokinins to produce yet unidentified compounds. The polypeptide is Bifunctional cytokinin biosynthesis protein (Fusarium pseudograminearum (strain CS3096) (Wheat and barley crown-rot fungus)).